A 312-amino-acid chain; its full sequence is Bifunctional pinoresinol-lariciresinol reductase 2 (312 aa).

NADP(+) contacts are provided by residues 11-17 (GGTGYIG), R36, and K45. The Proton acceptor role is filled by K138. R142 contacts NADP(+). H270 provides a ligand contact to substrate.

The protein belongs to the NmrA-type oxidoreductase family. Isoflavone reductase subfamily. In terms of assembly, dimer.

The catalysed reaction is (+)-lariciresinol + NADP(+) = (+)-pinoresinol + NADPH + H(+). It carries out the reaction (-)-secoisolariciresinol + NADP(+) = (+)-lariciresinol + NADPH + H(+). The enzyme catalyses (-)-lariciresinol + NADP(+) = (-)-pinoresinol + NADPH + H(+). In terms of biological role, reductase involved in lignan biosynthesis. Catalyzes the enantioselective sequential conversion of (+)-pinoresinol into (+)-lariciresinol and of (+)-lariciresinol into (-)-secoisolariciresinol. Can also convert with a lower efficiency (-)-pinoresinol into (-)-lariciresinol, but not (-)-lariciresinol into (+)-secoisolariciresinol. Abstracts the 4R-hydride from the NADPH cofactor during catalysis. This Thuja plicata (Western red-cedar) protein is Bifunctional pinoresinol-lariciresinol reductase 2 (PLR_Tp2).